Consider the following 897-residue polypeptide: Zinc finger protein zas1 (897 aa).

2 consecutive C2H2-type zinc fingers follow at residues 26–50 (FYCT…ERTH) and 56–79 (FSCS…QQMH). A C2H2-type 3; atypical zinc finger spans residues 93-119 (ASCFLGFCVLAHDYVNLINARHFMIEH).

The protein localises to the nucleus. In Schizosaccharomyces pombe (strain 972 / ATCC 24843) (Fission yeast), this protein is Zinc finger protein zas1 (zas1).